The following is a 694-amino-acid chain: Polyphosphate kinase (694 aa).

Position 45 (asparagine 45) interacts with ATP. Arginine 367 and arginine 397 together coordinate Mg(2+). Histidine 427 acts as the Phosphohistidine intermediate in catalysis. ATP contacts are provided by tyrosine 460, arginine 553, and histidine 580.

Belongs to the polyphosphate kinase 1 (PPK1) family. Requires Mg(2+) as cofactor. An intermediate of this reaction is the autophosphorylated ppk in which a phosphate is covalently linked to a histidine residue through a N-P bond.

The enzyme catalyses [phosphate](n) + ATP = [phosphate](n+1) + ADP. Its function is as follows. Catalyzes the reversible transfer of the terminal phosphate of ATP to form a long-chain polyphosphate (polyP). The polypeptide is Polyphosphate kinase (Campylobacter coli).